The chain runs to 115 residues: Probable prefoldin subunit 1 (115 aa).

Belongs to the prefoldin subunit beta family. Heterohexamer of two PFD-alpha type and four PFD-beta type subunits.

In terms of biological role, binds specifically to cytosolic chaperonin (c-CPN) and transfers target proteins to it. Binds to nascent polypeptide chain and promotes folding in an environment in which there are many competing pathways for nonnative proteins. This chain is Probable prefoldin subunit 1 (pfdn1), found in Dictyostelium discoideum (Social amoeba).